The primary structure comprises 2969 residues: Histone-lysine N-methyltransferase ASH1L (2969 aa).

Disordered stretches follow at residues 1 to 70 and 118 to 143; these read MDPR…TDAQ and HPRKALKSGKMTDEKNEHCPSKRDPS. The span at 21–31 shows a compositional bias: polar residues; the sequence is KSPSAISTGTL. Phosphoserine is present on S22. Basic and acidic residues-rich tracts occupy residues 33 to 65 and 127 to 143; these read SKREVELEKNTKEEEDLRKRNRERNIEAGKDDG and KMTDEKNEHCPSKRDPS. K34 is covalently cross-linked (Glycyl lysine isopeptide (Lys-Gly) (interchain with G-Cter in SUMO2)). K375 is modified (N6-acetyllysine). A Glycyl lysine isopeptide (Lys-Gly) (interchain with G-Cter in SUMO2) cross-link involves residue K425. A compositionally biased stretch (polar residues) spans 501–511; the sequence is IQQDSFSSSEK. Disordered stretches follow at residues 501 to 525, 537 to 583, 824 to 845, 878 to 966, 1100 to 1128, 1151 to 1231, and 1243 to 1281; these read IQQDSFSSSEKGSYETSKHEKQPPV, ASDV…PNPL, YKPKRGRPKSKEMPQLEGPPKR, KQGL…EMEP, SEILPSPICSQSSGTSGGQSPVSSDAGFV, MKKA…EHVS, and SLKEKHKHKCKRRNHDYLSYDKMKRQKRKRKKKYPQLRN. Basic and acidic residues predominate over residues 512–522; it reads GSYETSKHEKQ. Residues 554–579 show a composition bias toward polar residues; sequence NLPSPSPTVSVNPLTRSPPETSSQLA. Residues 887 to 897 are compositionally biased toward basic residues; it reads PKKRGRPKRQM. Positions 887-899 form a DNA-binding region, a.T hook 1; the sequence is PKKRGRPKRQMRS. Basic and acidic residues predominate over residues 920-932; that stretch reads SKLESESDNHRSS. A compositionally biased stretch (acidic residues) spans 936–949; the sequence is FESEDQLQDPDDLD. 2 stretches are compositionally biased toward low complexity: residues 1100-1123 and 1162-1175; these read SEILPSPICSQSSGTSGGQSPVSS and SPPTLLPNSPSHLS. Phosphoserine is present on residues S1162 and S1170. Over residues 1186–1211 the composition is skewed to polar residues; the sequence is SPISESHSDETIPSDSGIGTDNNSTS. Q1220 is modified (N5-methylglutamine). Composition is skewed to basic residues over residues 1246-1256 and 1266-1277; these read EKHKHKCKRRN and KRQKRKRKKKYP. The segment at residues 1347-1359 is a DNA-binding region (a.T hook 2); it reads KKKRGRPPKMREA. Disordered regions lie at residues 1489–1508, 1580–1711, and 1741–1761; these read HREHRSSEQPQVSMDTGSSR, SESS…ASGD, and ASAPPSSSPGRSHSKDRTLGK. 4 stretches are compositionally biased toward polar residues: residues 1496–1508, 1580–1598, 1605–1622, and 1650–1680; these read EQPQVSMDTGSSR, SESSPSLSLGGFTPNSEPA, NLFTSAIGSCRVSNPNSS, and LPSNERAVQTLAGSQPTSDKPSQRPSESTNC. Positions 1741–1751 are enriched in low complexity; the sequence is ASAPPSSSPGR. The a.T hook 3 DNA-binding region spans 1847-1859; the sequence is KRRPGRPRKCPLQ. Residues 1911–1991 are disordered; that stretch reads KKGLKRKGWL…PRPPKKKYQK (81 aa). The tract at residues 2069-2288 is catalytic domain; the sequence is PDVPLYKKIR…KCRGIIGGKS (220 aa). The AWS domain occupies 2091–2142; that stretch reads YEATTCNCKKPDDDTRKGCVDDCLNRMIFAECSPNTCPCGEQCCNQRIQRHE. The region spanning 2145–2261 is the SET domain; sequence QCLERFRAEE…AGTELTYDYN (117 aa). Residues 2269–2285 form the Post-SET domain; the sequence is KQQLCKCGFEKCRGIIG. Residues 2288–2346 are disordered; the sequence is SQRVNGLTSSKNSQPMATHKKSGRSKEKRKSKHKLKKRRGHLSEEPSENINTPTRLTPQ. The span at 2289-2303 shows a compositional bias: polar residues; the sequence is QRVNGLTSSKNSQPM. The span at 2305 to 2327 shows a compositional bias: basic residues; the sequence is THKKSGRSKEKRKSKHKLKKRRG. Residues K2317, K2319, and K2323 each carry the N6-acetyllysine modification. Residues 2335 to 2346 are compositionally biased toward polar residues; the sequence is ENINTPTRLTPQ. Residues 2444-2550 form the Bromo domain; that stretch reads RLAQIFKEIC…KAYYNARHEA (107 aa). Residues 2585–2631 form a PHD-type zinc finger; it reads VIRCICGLYKDEGLMIQCDKCMVWQHCDCMGVNSDVEHYLCEQCDPR. A BAH domain is found at 2661 to 2798; that stretch reads LLLRQGDCVY…KSAHLFYKIH (138 aa). Disordered regions lie at residues 2825-2856 and 2876-2919; these read SPHYVPDNYKRNGGRSSWKSERSKPPLKDLGQ and NEIP…RRHN. Basic and acidic residues predominate over residues 2842–2855; that stretch reads WKSERSKPPLKDLG.

The protein belongs to the class V-like SAM-binding methyltransferase superfamily. Histone-lysine methyltransferase family. SET2 subfamily. In terms of processing, methylated at Gln-1220 by N6AMT1. In terms of tissue distribution, widely expressed, with highest level in brain, heart and kidney.

Its subcellular location is the nucleus. The protein resides in the cell junction. The protein localises to the tight junction. It is found in the chromosome. It carries out the reaction L-lysyl(36)-[histone H3] + 3 S-adenosyl-L-methionine = N(6),N(6),N(6)-trimethyl-L-lysyl(36)-[histone H3] + 3 S-adenosyl-L-homocysteine + 3 H(+). The catalysed reaction is L-lysyl(9)-[histone H3] + S-adenosyl-L-methionine = N(6)-methyl-L-lysyl(9)-[histone H3] + S-adenosyl-L-homocysteine + H(+). In terms of biological role, histone methyltransferase specifically trimethylating 'Lys-36' of histone H3 forming H3K36me3. Also monomethylates 'Lys-9' of histone H3 (H3K9me1) in vitro. The physiological significance of the H3K9me1 activity is unclear. The polypeptide is Histone-lysine N-methyltransferase ASH1L (ASH1L) (Homo sapiens (Human)).